A 162-amino-acid chain; its full sequence is NADH-quinone oxidoreductase subunit C (162 aa).

This sequence belongs to the complex I 30 kDa subunit family. NDH-1 is composed of 14 different subunits. Subunits NuoB, C, D, E, F, and G constitute the peripheral sector of the complex.

The protein localises to the cell inner membrane. The enzyme catalyses a quinone + NADH + 5 H(+)(in) = a quinol + NAD(+) + 4 H(+)(out). NDH-1 shuttles electrons from NADH, via FMN and iron-sulfur (Fe-S) centers, to quinones in the respiratory chain. The immediate electron acceptor for the enzyme in this species is believed to be ubiquinone. Couples the redox reaction to proton translocation (for every two electrons transferred, four hydrogen ions are translocated across the cytoplasmic membrane), and thus conserves the redox energy in a proton gradient. The sequence is that of NADH-quinone oxidoreductase subunit C from Geobacter metallireducens (strain ATCC 53774 / DSM 7210 / GS-15).